The chain runs to 215 residues: Pyrrolidone-carboxylate peptidase (215 aa).

Active-site residues include E80, C143, and H167.

Belongs to the peptidase C15 family. As to quaternary structure, homotetramer.

The protein resides in the cytoplasm. It carries out the reaction Release of an N-terminal pyroglutamyl group from a polypeptide, the second amino acid generally not being Pro.. Functionally, removes 5-oxoproline from various penultimate amino acid residues except L-proline. The protein is Pyrrolidone-carboxylate peptidase of Bacillus cereus (strain ATCC 14579 / DSM 31 / CCUG 7414 / JCM 2152 / NBRC 15305 / NCIMB 9373 / NCTC 2599 / NRRL B-3711).